We begin with the raw amino-acid sequence, 262 residues long: Polyamine aminopropyltransferase (262 aa).

A PABS domain is found at 1–249 (MWITQEITPY…DIHRAAFALP (249 aa)). Residue Asn-29 coordinates S-methyl-5'-thioadenosine. Position 83 (Asp-83) interacts with spermidine. Asp-155 (proton acceptor) is an active-site residue.

Belongs to the spermidine/spermine synthase family. Homodimer or homotetramer.

The protein localises to the cytoplasm. The catalysed reaction is S-adenosyl 3-(methylsulfanyl)propylamine + putrescine = S-methyl-5'-thioadenosine + spermidine + H(+). It functions in the pathway amine and polyamine biosynthesis; spermidine biosynthesis; spermidine from putrescine: step 1/1. Catalyzes the irreversible transfer of a propylamine group from the amino donor S-adenosylmethioninamine (decarboxy-AdoMet) to putrescine (1,4-diaminobutane) to yield spermidine. The polypeptide is Polyamine aminopropyltransferase (Helicobacter acinonychis (strain Sheeba)).